The following is an 815-amino-acid chain: Probable AMP deaminase (815 aa).

Residues Tyr5–Met27 form a helical membrane-spanning segment. Disordered regions lie at residues Leu53–Thr116 and Leu144–Met173. Residues Val105–Thr116 show a composition bias toward low complexity. The span at Ala159–Met173 shows a compositional bias: polar residues. Zn(2+) contacts are provided by His367 and His369. Residues His369 and Lys438–Tyr443 contribute to the substrate site. His635 is a binding site for Zn(2+). Glu638 serves as a coordination point for substrate. His657 serves as the catalytic Proton acceptor. Asp712 contributes to the Zn(2+) binding site. Position 713-716 (Asp713–Gln716) interacts with substrate.

The protein belongs to the metallo-dependent hydrolases superfamily. Adenosine and AMP deaminases family. Homodimer. Zn(2+) serves as cofactor.

The protein localises to the membrane. The catalysed reaction is AMP + H2O + H(+) = IMP + NH4(+). The protein operates within purine metabolism; IMP biosynthesis via salvage pathway; IMP from AMP: step 1/1. In terms of biological role, AMP deaminase plays a critical role in energy metabolism. The chain is Probable AMP deaminase (AMPD) from Oryza sativa subsp. japonica (Rice).